Consider the following 222-residue polypeptide: Phosphoribosylformylglycinamidine synthase subunit PurQ (222 aa).

The 220-residue stretch at 3–222 (AAVVVFPGSN…RALTGALAAV (220 aa)) folds into the Glutamine amidotransferase type-1 domain. C86 (nucleophile) is an active-site residue. Catalysis depends on residues H194 and E196.

Part of the FGAM synthase complex composed of 1 PurL, 1 PurQ and 2 PurS subunits.

Its subcellular location is the cytoplasm. The enzyme catalyses N(2)-formyl-N(1)-(5-phospho-beta-D-ribosyl)glycinamide + L-glutamine + ATP + H2O = 2-formamido-N(1)-(5-O-phospho-beta-D-ribosyl)acetamidine + L-glutamate + ADP + phosphate + H(+). It catalyses the reaction L-glutamine + H2O = L-glutamate + NH4(+). It participates in purine metabolism; IMP biosynthesis via de novo pathway; 5-amino-1-(5-phospho-D-ribosyl)imidazole from N(2)-formyl-N(1)-(5-phospho-D-ribosyl)glycinamide: step 1/2. Its function is as follows. Part of the phosphoribosylformylglycinamidine synthase complex involved in the purines biosynthetic pathway. Catalyzes the ATP-dependent conversion of formylglycinamide ribonucleotide (FGAR) and glutamine to yield formylglycinamidine ribonucleotide (FGAM) and glutamate. The FGAM synthase complex is composed of three subunits. PurQ produces an ammonia molecule by converting glutamine to glutamate. PurL transfers the ammonia molecule to FGAR to form FGAM in an ATP-dependent manner. PurS interacts with PurQ and PurL and is thought to assist in the transfer of the ammonia molecule from PurQ to PurL. The protein is Phosphoribosylformylglycinamidine synthase subunit PurQ of Roseobacter denitrificans (strain ATCC 33942 / OCh 114) (Erythrobacter sp. (strain OCh 114)).